Consider the following 197-residue polypeptide: Probable nicotinate-nucleotide adenylyltransferase (197 aa).

The protein belongs to the NadD family.

It carries out the reaction nicotinate beta-D-ribonucleotide + ATP + H(+) = deamido-NAD(+) + diphosphate. The protein operates within cofactor biosynthesis; NAD(+) biosynthesis; deamido-NAD(+) from nicotinate D-ribonucleotide: step 1/1. In terms of biological role, catalyzes the reversible adenylation of nicotinate mononucleotide (NaMN) to nicotinic acid adenine dinucleotide (NaAD). This Borrelia garinii subsp. bavariensis (strain ATCC BAA-2496 / DSM 23469 / PBi) (Borreliella bavariensis) protein is Probable nicotinate-nucleotide adenylyltransferase.